Reading from the N-terminus, the 331-residue chain is MKKNYYALAYYYLTRVDNPQLEIALHKELFKDLDVSCRIYISEQGINGQFSGYQPDAEHYMNWLRQRPGFSNVKFKIHHIEENIFPRVTVKYRKELVALGCDVDLTTQGKHISPKEWHEKLKENRCLVLDVRNNYEWKIGHFENAVLPDIQTFREFPEYAERLSKEHDPATTPVMMYCTGGIRCELYSSLLLEKGFKEVYQLDGGVIAYGQAVGTGKWRGKLFVFDDRLAVPIDETDTDVAPIAQCSHCGVGCDTYYNCANTDCNNLFICCEDCIDSTKGCCSQECSQAPRIRAFSPSRGNKPFRRMHLCEQVECEQVEKKASSCCCSCSH.

One can recognise a Rhodanese domain in the interval 122–218 (KENRCLVLDV…YGQAVGTGKW (97 aa)). Cys178 acts as the Cysteine persulfide intermediate in catalysis.

Belongs to the TrhO family.

It carries out the reaction uridine(34) in tRNA + AH2 + O2 = 5-hydroxyuridine(34) in tRNA + A + H2O. In terms of biological role, catalyzes oxygen-dependent 5-hydroxyuridine (ho5U) modification at position 34 in tRNAs. This Chlamydia caviae (strain ATCC VR-813 / DSM 19441 / 03DC25 / GPIC) (Chlamydophila caviae) protein is tRNA uridine(34) hydroxylase.